The following is a 242-amino-acid chain: Uridylate kinase (242 aa).

17–20 (KLSG) serves as a coordination point for ATP. UMP is bound at residue G59. G60 and R64 together coordinate ATP. UMP is bound by residues D79 and 140–147 (TGNPFFTT). ATP contacts are provided by T167, Y173, and D176.

Belongs to the UMP kinase family. Homohexamer.

It localises to the cytoplasm. It catalyses the reaction UMP + ATP = UDP + ADP. Its pathway is pyrimidine metabolism; CTP biosynthesis via de novo pathway; UDP from UMP (UMPK route): step 1/1. Its activity is regulated as follows. Inhibited by UTP. In terms of biological role, catalyzes the reversible phosphorylation of UMP to UDP. The polypeptide is Uridylate kinase (Marinobacter nauticus (strain ATCC 700491 / DSM 11845 / VT8) (Marinobacter aquaeolei)).